Reading from the N-terminus, the 776-residue chain is Kinesin-like protein KLP1 (776 aa).

Positions 5–335 (AVKVFVRTRP…LRFASRVRTL (331 aa)) constitute a Kinesin motor domain. 91–98 (GQTGAGKT) is an ATP binding site. Residues 348–371 (ALLLRRYERQIKELKAELAMRDTL) adopt a coiled-coil conformation. A disordered region spans residues 441 to 535 (RRATEEGSGA…SNWGDAGPLS (95 aa)). The span at 447–460 (GSGAAARGGDSAGP) shows a compositional bias: low complexity. A coiled-coil region spans residues 579 to 657 (ALADTKASIR…SLKSAREELE (79 aa)). The interval 658-776 (PQIQAVAVAR…TQAVNRGLAR (119 aa)) is globular.

Belongs to the TRAFAC class myosin-kinesin ATPase superfamily. Kinesin family.

It localises to the cytoplasm. The protein resides in the cytoskeleton. The protein localises to the flagellum axoneme. Its function is as follows. May play a role in rotation or twisting of the central pair microtubules of the flagella axoneme. The protein is Kinesin-like protein KLP1 (KLP1) of Chlamydomonas reinhardtii (Chlamydomonas smithii).